Consider the following 171-residue polypeptide: 3-hydroxydecanoyl-[acyl-carrier-protein] dehydratase (171 aa).

Residue histidine 70 is part of the active site.

The protein belongs to the thioester dehydratase family. FabA subfamily. As to quaternary structure, homodimer.

It localises to the cytoplasm. It catalyses the reaction a (3R)-hydroxyacyl-[ACP] = a (2E)-enoyl-[ACP] + H2O. The enzyme catalyses (3R)-hydroxydecanoyl-[ACP] = (2E)-decenoyl-[ACP] + H2O. It carries out the reaction (2E)-decenoyl-[ACP] = (3Z)-decenoyl-[ACP]. It functions in the pathway lipid metabolism; fatty acid biosynthesis. Its function is as follows. Necessary for the introduction of cis unsaturation into fatty acids. Catalyzes the dehydration of (3R)-3-hydroxydecanoyl-ACP to E-(2)-decenoyl-ACP and then its isomerization to Z-(3)-decenoyl-ACP. Can catalyze the dehydratase reaction for beta-hydroxyacyl-ACPs with saturated chain lengths up to 16:0, being most active on intermediate chain length. This Pseudomonas putida (strain W619) protein is 3-hydroxydecanoyl-[acyl-carrier-protein] dehydratase.